We begin with the raw amino-acid sequence, 100 residues long: Glyceraldehyde-3-phosphate dehydrogenase, testis-specific (100 aa).

NAD(+) is bound by residues Asp39 and Thr64. Arg89 lines the D-glyceraldehyde 3-phosphate pocket.

Belongs to the glyceraldehyde-3-phosphate dehydrogenase family. In terms of assembly, homotetramer.

The protein localises to the cytoplasm. It carries out the reaction D-glyceraldehyde 3-phosphate + phosphate + NAD(+) = (2R)-3-phospho-glyceroyl phosphate + NADH + H(+). It functions in the pathway carbohydrate degradation; glycolysis; pyruvate from D-glyceraldehyde 3-phosphate: step 1/5. In terms of biological role, may play an important role in regulating the switch between different pathways for energy production during spermiogenesis and in the spermatozoon. Required for sperm motility and male fertility. This chain is Glyceraldehyde-3-phosphate dehydrogenase, testis-specific, found in Mesocricetus auratus (Golden hamster).